Here is a 264-residue protein sequence, read N- to C-terminus: uncharacterized protein (264 aa).

The signal sequence occupies residues 1–16; it reads MKGKSALTLLLAGIFS. The N-palmitoyl cysteine moiety is linked to residue Cys17. Residue Cys17 is the site of S-diacylglycerol cysteine attachment.

The protein localises to the cell inner membrane. This is an uncharacterized protein from Escherichia coli (strain K12).